The following is a 72-amino-acid chain: Protein RALF-like 36 (72 aa).

The first 27 residues, 1–27 (MGISKKTVVQSFALIIIISIVMSTTEA), serve as a signal peptide directing secretion. Intrachain disulfides connect cysteine 43–cysteine 51 and cysteine 63–cysteine 69.

The protein belongs to the plant rapid alkalinization factor (RALF) family.

It localises to the secreted. Functionally, cell signaling peptide that may regulate plant stress, growth, and development. Mediates a rapid alkalinization of extracellular space by mediating a transient increase in the cytoplasmic Ca(2+) concentration leading to a calcium-dependent signaling events through a cell surface receptor and a concomitant activation of some intracellular mitogen-activated protein kinases. The polypeptide is Protein RALF-like 36 (Arabidopsis thaliana (Mouse-ear cress)).